The chain runs to 343 residues: S-adenosylmethionine:tRNA ribosyltransferase-isomerase (343 aa).

The protein belongs to the QueA family. In terms of assembly, monomer.

Its subcellular location is the cytoplasm. It carries out the reaction 7-aminomethyl-7-carbaguanosine(34) in tRNA + S-adenosyl-L-methionine = epoxyqueuosine(34) in tRNA + adenine + L-methionine + 2 H(+). Its pathway is tRNA modification; tRNA-queuosine biosynthesis. Functionally, transfers and isomerizes the ribose moiety from AdoMet to the 7-aminomethyl group of 7-deazaguanine (preQ1-tRNA) to give epoxyqueuosine (oQ-tRNA). The sequence is that of S-adenosylmethionine:tRNA ribosyltransferase-isomerase from Stenotrophomonas maltophilia (strain R551-3).